Here is a 273-residue protein sequence, read N- to C-terminus: MAVVKCKPTSPGRRHVIKVVNNELYKGKPYSLLLRKKSKSGGRNNNGRITTRHIGGGHKRAYRIVDFKRNKDDIGATVERFEYDPNRSSNIALILYKDGERKYILAPKGIKIGDTIISGLRAPIKTGNTLPLKNIPVGTFVHNVELKPGKGGQIARSAGSYVQLVAFDEEYATLRLRSGEMRKTQSNCRATIGEVGNSEHMLKVLGKAGASRWIGIRPTVRGTAMNPVDHPHGGGEGRNFGKHPVTPWGIQTKGKKTRKNKRTDKFILRHRRK.

The interval 224–264 is disordered; sequence AMNPVDHPHGGGEGRNFGKHPVTPWGIQTKGKKTRKNKRTD. Positions 253-264 are enriched in basic residues; that stretch reads KGKKTRKNKRTD.

Belongs to the universal ribosomal protein uL2 family. Part of the 50S ribosomal subunit. Forms a bridge to the 30S subunit in the 70S ribosome.

One of the primary rRNA binding proteins. Required for association of the 30S and 50S subunits to form the 70S ribosome, for tRNA binding and peptide bond formation. It has been suggested to have peptidyltransferase activity; this is somewhat controversial. Makes several contacts with the 16S rRNA in the 70S ribosome. In Buchnera aphidicola subsp. Acyrthosiphon pisum (strain 5A), this protein is Large ribosomal subunit protein uL2.